The chain runs to 368 residues: uncharacterized protein (368 aa).

The disordered stretch occupies residues 237-287; it reads ESLSIPSRRRPSSIAPIGTRPSRKEIAFSNSSTPTDQTLRPPNPPAANGNA. Low complexity predominate over residues 238–253; the sequence is SLSIPSRRRPSSIAPI. The segment covering 264–276 has biased composition (polar residues); that stretch reads FSNSSTPTDQTLR.

This is an uncharacterized protein from Schizosaccharomyces pombe (strain 972 / ATCC 24843) (Fission yeast).